The sequence spans 945 residues: Kinesin-like protein CIN8 (945 aa).

The region spanning 22–409 is the Kinesin motor domain; sequence NITVAVRCRG…LEYAAKAKNI (388 aa). 114–121 contacts ATP; it reads GMTSTGKT. A disordered region spans residues 190–243; that stretch reads IFDSSSMNHSSRASSQSNSPREPEVAHNGFSRRRQRPPPVKANRMSATKQQLSE. Residues 193–208 show a composition bias toward low complexity; it reads SSSMNHSSRASSQSNS. Residues 234–243 are compositionally biased toward polar residues; that stretch reads MSATKQQLSE. Coiled coils occupy residues 450 to 562 and 634 to 675; these read MSHE…DIKE and LKEF…YLDQ.

This sequence belongs to the TRAFAC class myosin-kinesin ATPase superfamily. Kinesin family. BimC subfamily.

It localises to the cytoplasm. The protein resides in the cytoskeleton. Its subcellular location is the spindle. Functionally, elongates the mitotic spindle by interacting with spindle microtubules to generate an outward force pushing spindle poles apart. Following spindle assembly, CIN8 and KIP1 apparently act to oppose a force, possibly generated by KAR3, that draws separated poles back together. This chain is Kinesin-like protein CIN8 (CIN8), found in Eremothecium gossypii (strain ATCC 10895 / CBS 109.51 / FGSC 9923 / NRRL Y-1056) (Yeast).